We begin with the raw amino-acid sequence, 147 residues long: SsrA-binding protein (147 aa).

Positions 119-147 are disordered; that stretch reads AKGKKQHDKRESEKQKEWERDKQRLMRPK. A compositionally biased stretch (basic and acidic residues) spans 126–147; that stretch reads DKRESEKQKEWERDKQRLMRPK.

This sequence belongs to the SmpB family.

The protein resides in the cytoplasm. In terms of biological role, required for rescue of stalled ribosomes mediated by trans-translation. Binds to transfer-messenger RNA (tmRNA), required for stable association of tmRNA with ribosomes. tmRNA and SmpB together mimic tRNA shape, replacing the anticodon stem-loop with SmpB. tmRNA is encoded by the ssrA gene; the 2 termini fold to resemble tRNA(Ala) and it encodes a 'tag peptide', a short internal open reading frame. During trans-translation Ala-aminoacylated tmRNA acts like a tRNA, entering the A-site of stalled ribosomes, displacing the stalled mRNA. The ribosome then switches to translate the ORF on the tmRNA; the nascent peptide is terminated with the 'tag peptide' encoded by the tmRNA and targeted for degradation. The ribosome is freed to recommence translation, which seems to be the essential function of trans-translation. In Nitrosospira multiformis (strain ATCC 25196 / NCIMB 11849 / C 71), this protein is SsrA-binding protein.